The following is a 319-amino-acid chain: Melanoma-associated antigen B2 (319 aa).

The segment covering Met1–Lys17 has biased composition (basic residues). Residues Met1–Thr112 are disordered. Composition is skewed to low complexity over residues Pro39–Gly57, Thr67–Thr79, and Ala94–Ser105. Residues Ser77 and Ser105 each carry the phosphoserine modification. The MAGE domain occupies Leu111 to Ala310.

As to quaternary structure, interacts with TRIM28. Expressed in testis and placenta, and in a significant fraction of tumors of various histologic types.

Its function is as follows. May enhance ubiquitin ligase activity of RING-type zinc finger-containing E3 ubiquitin-protein ligases. Proposed to act through recruitment and/or stabilization of the Ubl-conjugating enzyme (E2) at the E3:substrate complex. The polypeptide is Melanoma-associated antigen B2 (MAGEB2) (Homo sapiens (Human)).